The primary structure comprises 394 residues: Elongation factor Tu (394 aa).

The tr-type G domain occupies 10–204 (KPHVNVGTIG…ALDRYIPTPE (195 aa)). Residues 19–26 (GHVDHGKT) are G1. 19–26 (GHVDHGKT) contacts GTP. Thr26 is a Mg(2+) binding site. The G2 stretch occupies residues 60–64 (GITIN). The tract at residues 81–84 (DCPG) is G3. Residues 81-85 (DCPGH) and 136-139 (NKCD) contribute to the GTP site. The interval 136-139 (NKCD) is G4. The segment at 174–176 (SAL) is G5.

The protein belongs to the TRAFAC class translation factor GTPase superfamily. Classic translation factor GTPase family. EF-Tu/EF-1A subfamily. As to quaternary structure, monomer.

The protein localises to the cytoplasm. It carries out the reaction GTP + H2O = GDP + phosphate + H(+). Its function is as follows. GTP hydrolase that promotes the GTP-dependent binding of aminoacyl-tRNA to the A-site of ribosomes during protein biosynthesis. The polypeptide is Elongation factor Tu (Neisseria gonorrhoeae).